The sequence spans 356 residues: sn-glycerol-3-phosphate import ATP-binding protein UgpC (356 aa).

Residues 4–235 (LKLQAVTKSW…PASLFVASFI (232 aa)) form the ABC transporter domain. 37-44 (GPSGCGKS) lines the ATP pocket.

Belongs to the ABC transporter superfamily. sn-glycerol-3-phosphate importer (TC 3.A.1.1.3) family. The complex is composed of two ATP-binding proteins (UgpC), two transmembrane proteins (UgpA and UgpE) and a solute-binding protein (UgpB).

The protein resides in the cell inner membrane. It carries out the reaction sn-glycerol 3-phosphate(out) + ATP + H2O = sn-glycerol 3-phosphate(in) + ADP + phosphate + H(+). Its function is as follows. Part of the ABC transporter complex UgpBAEC involved in sn-glycerol-3-phosphate (G3P) import. Responsible for energy coupling to the transport system. The sequence is that of sn-glycerol-3-phosphate import ATP-binding protein UgpC from Shigella boydii serotype 4 (strain Sb227).